The following is a 927-amino-acid chain: GPI inositol-deacylase (927 aa).

The Cytoplasmic portion of the chain corresponds to 1 to 4 (MNPL). The helical transmembrane segment at 5–25 (SAVFNSVVLVLLALGVTDVFF) threads the bilayer. Residues 26 to 595 (SYESSRCSMT…QIVRFHGIYL (570 aa)) are Lumenal-facing. 2 N-linked (GlcNAc...) asparagine glycosylation sites follow: asparagine 75 and asparagine 155. Residue serine 169 is part of the active site. N-linked (GlcNAc...) asparagine glycans are attached at residues asparagine 230, asparagine 362, asparagine 397, asparagine 432, asparagine 444, and asparagine 482. The chain crosses the membrane as a helical span at residues 596 to 616 (PVYIVANLLLAYGAQLHSILI). The Cytoplasmic segment spans residues 617 to 672 (QGSCMDLDLSFDVAAKPYKVDPVLIICKYLLNYKWFKNYWDGLMLPQLDAVQLHAY). A helical transmembrane segment spans residues 673 to 693 (GFWFPLASLFFFIFGTSIAYW). Residues 694 to 733 (SSIGLQAAVRILSSLWIYLKRPSMFPKESKCITYRVYAET) lie on the Lumenal side of the membrane. Residues 734-754 (LFFAFISWRSCGTFSLLLVFL) form a helical membrane-spanning segment. The Cytoplasmic segment spans residues 755 to 821 (RYLSKVLILY…KALDDCLKMH (67 aa)). Residues 822–842 (FTILHLNLWIVLLGLPSFIYW) form a helical membrane-spanning segment. Over 843–858 (LKTLRYTIQLDPDPNR) the chain is Lumenal. Residues 859-879 (VSALVLIFILEILMNSTTSAI) form a helical membrane-spanning segment. Residues 880 to 887 (KSSVCLKT) lie on the Cytoplasmic side of the membrane. A helical transmembrane segment spans residues 888–908 (AAVLQLPLSIIVVAFGTLHLY). The Lumenal segment spans residues 909-927 (RISNLIAFSLFLHVVCCFV).

It belongs to the GPI inositol-deacylase family.

It localises to the endoplasmic reticulum membrane. Functionally, GPI inositol-deacylase that catalyzes the remove of the acyl chain linked to the 2-OH position of inositol ring from the GPI-anchored protein (GPI-AP) in the endoplasmic reticulum. Initiates the post-attachment remodeling phase of GPI-AP biogenesis and participates in endoplasmic reticulum (ER)-to-Golgi transport of GPI-anchored protein. The chain is GPI inositol-deacylase from Xenopus laevis (African clawed frog).